A 304-amino-acid polypeptide reads, in one-letter code: NADH-cytochrome b5 reductase 2 (304 aa).

Residues 9–29 form a helical membrane-spanning segment; sequence MLVALAVIGVTVLLFLIKALG. The region spanning 43–155 is the FAD-binding FR-type domain; the sequence is NAKYPLPLIE…RGPNGLLVYK (113 aa). FAD is bound by residues 135-150 and 174-209; these read DSLKIGETIDFRGPNG and VAKHVGMLAGGTGITPMLQLIRQITQDPNDNTKCSL.

The protein belongs to the flavoprotein pyridine nucleotide cytochrome reductase family. Requires FAD as cofactor.

Its subcellular location is the membrane. The enzyme catalyses 2 Fe(III)-[cytochrome b5] + NADH = 2 Fe(II)-[cytochrome b5] + NAD(+) + H(+). In terms of biological role, NADH-cytochrome b5 reductases are involved in desaturation and elongation of fatty acids, cholesterol biosynthesis and drug metabolism. The protein is NADH-cytochrome b5 reductase 2 (cyb5r2) of Xenopus tropicalis (Western clawed frog).